We begin with the raw amino-acid sequence, 842 residues long: Circularly permutated Ras protein 1 (842 aa).

GTP is bound by residues 62 to 66 (DTAGQ), 121 to 124 (NKVD), and 181 to 188 (GGGGVGKS). A disordered region spans residues 253–274 (SGKDKQPSPQQAASPSTIDRTG). Over residues 259–274 (PSPQQAASPSTIDRTG) the composition is skewed to polar residues. The VWFA domain maps to 377–627 (IIIYCIDVSG…TQNPMIATDV (251 aa)).

Belongs to the small GTPase superfamily. CpRas family.

The sequence is that of Circularly permutated Ras protein 1 (cpras1) from Dictyostelium discoideum (Social amoeba).